We begin with the raw amino-acid sequence, 87 residues long: Polyketide-8 synthase acyl carrier protein 2 (87 aa).

A Carrier domain is found at A8 to L83. The residue at position 43 (S43) is an O-(pantetheine 4'-phosphoryl)serine.

In terms of processing, 4'-phosphopantetheine is transferred from CoA to a specific serine of the apo-ACP-like protein.

In terms of biological role, acyl carrier protein. The polypeptide is Polyketide-8 synthase acyl carrier protein 2 (Streptomyces avermitilis (strain ATCC 31267 / DSM 46492 / JCM 5070 / NBRC 14893 / NCIMB 12804 / NRRL 8165 / MA-4680)).